Reading from the N-terminus, the 118-residue chain is Large ribosomal subunit protein bL20 (118 aa).

Belongs to the bacterial ribosomal protein bL20 family.

Functionally, binds directly to 23S ribosomal RNA and is necessary for the in vitro assembly process of the 50S ribosomal subunit. It is not involved in the protein synthesizing functions of that subunit. This is Large ribosomal subunit protein bL20 from Yersinia enterocolitica serotype O:8 / biotype 1B (strain NCTC 13174 / 8081).